Reading from the N-terminus, the 338-residue chain is Glycerol-3-phosphate dehydrogenase [NAD(P)+] (338 aa).

NADPH is bound by residues Trp-11, Arg-30, and Lys-109. Sn-glycerol 3-phosphate contacts are provided by Lys-109, Gly-143, and Ser-145. Ala-147 contributes to the NADPH binding site. Sn-glycerol 3-phosphate-binding residues include Lys-198, Asp-251, Ser-261, Arg-262, and Asn-263. The active-site Proton acceptor is the Lys-198. Arg-262 contacts NADPH. NADPH-binding residues include Val-286 and Glu-288.

The protein belongs to the NAD-dependent glycerol-3-phosphate dehydrogenase family.

It is found in the cytoplasm. The catalysed reaction is sn-glycerol 3-phosphate + NAD(+) = dihydroxyacetone phosphate + NADH + H(+). It carries out the reaction sn-glycerol 3-phosphate + NADP(+) = dihydroxyacetone phosphate + NADPH + H(+). It participates in membrane lipid metabolism; glycerophospholipid metabolism. Catalyzes the reduction of the glycolytic intermediate dihydroxyacetone phosphate (DHAP) to sn-glycerol 3-phosphate (G3P), the key precursor for phospholipid synthesis. In Cupriavidus taiwanensis (strain DSM 17343 / BCRC 17206 / CCUG 44338 / CIP 107171 / LMG 19424 / R1) (Ralstonia taiwanensis (strain LMG 19424)), this protein is Glycerol-3-phosphate dehydrogenase [NAD(P)+].